Consider the following 955-residue polypeptide: Glycine dehydrogenase (decarboxylating) (955 aa).

Residue Lys-702 is modified to N6-(pyridoxal phosphate)lysine.

It belongs to the GcvP family. The glycine cleavage system is composed of four proteins: P, T, L and H. It depends on pyridoxal 5'-phosphate as a cofactor.

The enzyme catalyses N(6)-[(R)-lipoyl]-L-lysyl-[glycine-cleavage complex H protein] + glycine + H(+) = N(6)-[(R)-S(8)-aminomethyldihydrolipoyl]-L-lysyl-[glycine-cleavage complex H protein] + CO2. Its function is as follows. The glycine cleavage system catalyzes the degradation of glycine. The P protein binds the alpha-amino group of glycine through its pyridoxal phosphate cofactor; CO(2) is released and the remaining methylamine moiety is then transferred to the lipoamide cofactor of the H protein. The polypeptide is Glycine dehydrogenase (decarboxylating) (Bradyrhizobium diazoefficiens (strain JCM 10833 / BCRC 13528 / IAM 13628 / NBRC 14792 / USDA 110)).